We begin with the raw amino-acid sequence, 98 residues long: Large ribosomal subunit protein uL23 (98 aa).

Belongs to the universal ribosomal protein uL23 family. As to quaternary structure, part of the 50S ribosomal subunit. Contacts protein L29, and trigger factor when it is bound to the ribosome.

One of the early assembly proteins it binds 23S rRNA. One of the proteins that surrounds the polypeptide exit tunnel on the outside of the ribosome. Forms the main docking site for trigger factor binding to the ribosome. This is Large ribosomal subunit protein uL23 from Rickettsia rickettsii (strain Iowa).